The sequence spans 304 residues: Quinolinate synthase (304 aa).

Iminosuccinate-binding residues include His23 and Ser40. Cys85 serves as a coordination point for [4Fe-4S] cluster. Iminosuccinate is bound by residues 111–113 (YVN) and Ser128. Cys171 contributes to the [4Fe-4S] cluster binding site. Iminosuccinate-binding positions include 197–199 (HPE) and Thr214. Cys259 serves as a coordination point for [4Fe-4S] cluster.

This sequence belongs to the quinolinate synthase family. Type 2 subfamily. Requires [4Fe-4S] cluster as cofactor.

The protein resides in the cytoplasm. It carries out the reaction iminosuccinate + dihydroxyacetone phosphate = quinolinate + phosphate + 2 H2O + H(+). It participates in cofactor biosynthesis; NAD(+) biosynthesis; quinolinate from iminoaspartate: step 1/1. Catalyzes the condensation of iminoaspartate with dihydroxyacetone phosphate to form quinolinate. The protein is Quinolinate synthase of Pelobacter propionicus (strain DSM 2379 / NBRC 103807 / OttBd1).